An 877-amino-acid chain; its full sequence is Alanine--tRNA ligase (877 aa).

Histidine 567, histidine 571, cysteine 669, and histidine 673 together coordinate Zn(2+).

The protein belongs to the class-II aminoacyl-tRNA synthetase family. Zn(2+) serves as cofactor.

The protein localises to the cytoplasm. It carries out the reaction tRNA(Ala) + L-alanine + ATP = L-alanyl-tRNA(Ala) + AMP + diphosphate. Functionally, catalyzes the attachment of alanine to tRNA(Ala) in a two-step reaction: alanine is first activated by ATP to form Ala-AMP and then transferred to the acceptor end of tRNA(Ala). Also edits incorrectly charged Ser-tRNA(Ala) and Gly-tRNA(Ala) via its editing domain. In Rickettsia typhi (strain ATCC VR-144 / Wilmington), this protein is Alanine--tRNA ligase.